The sequence spans 552 residues: Probable acyl-activating enzyme 5, peroxisomal (552 aa).

The Microbody targeting signal signature appears at 550 to 552 (SRM).

The protein belongs to the ATP-dependent AMP-binding enzyme family. Expressed in roots, stems and developing seeds.

It is found in the peroxisome. Its function is as follows. May act as an acid--thiol ligase that activates carboxylic acids by forming acyl-CoAs. The polypeptide is Probable acyl-activating enzyme 5, peroxisomal (AAE5) (Arabidopsis thaliana (Mouse-ear cress)).